Reading from the N-terminus, the 331-residue chain is Ornithine carbamoyltransferase, catabolic (331 aa).

Carbamoyl phosphate-binding positions include 57–60, Gln82, Arg106, and 133–136; these read STRT and HPTQ. Residues Asn166, Asp230, and 234–235 contribute to the L-ornithine site; that span reads SM. Carbamoyl phosphate is bound by residues 272 to 273 and Arg317; that span reads CL.

This sequence belongs to the aspartate/ornithine carbamoyltransferase superfamily. OTCase family.

The protein localises to the cytoplasm. It catalyses the reaction carbamoyl phosphate + L-ornithine = L-citrulline + phosphate + H(+). It functions in the pathway amino-acid degradation; L-arginine degradation via ADI pathway; carbamoyl phosphate from L-arginine: step 2/2. In terms of biological role, reversibly catalyzes the transfer of the carbamoyl group from carbamoyl phosphate (CP) to the N(epsilon) atom of ornithine (ORN) to produce L-citrulline. The protein is Ornithine carbamoyltransferase, catabolic (arcB) of Clostridium perfringens (strain ATCC 13124 / DSM 756 / JCM 1290 / NCIMB 6125 / NCTC 8237 / Type A).